The following is a 396-amino-acid chain: Ribosomal RNA small subunit methyltransferase H (396 aa).

S-adenosyl-L-methionine is bound by residues glycine 101 to histidine 103, aspartate 120, tyrosine 147, aspartate 171, and glutamine 178.

This sequence belongs to the methyltransferase superfamily. RsmH family.

The protein localises to the cytoplasm. The catalysed reaction is cytidine(1402) in 16S rRNA + S-adenosyl-L-methionine = N(4)-methylcytidine(1402) in 16S rRNA + S-adenosyl-L-homocysteine + H(+). Its function is as follows. Specifically methylates the N4 position of cytidine in position 1402 (C1402) of 16S rRNA. In Mycobacterium bovis (strain ATCC BAA-935 / AF2122/97), this protein is Ribosomal RNA small subunit methyltransferase H.